Here is a 226-residue protein sequence, read N- to C-terminus: LexA repressor (226 aa).

The segment at residues Arg-28–Arg-48 is a DNA-binding region (H-T-H motif). Residues Ser-133 and Lys-170 each act as for autocatalytic cleavage activity in the active site.

It belongs to the peptidase S24 family. In terms of assembly, homodimer.

The enzyme catalyses Hydrolysis of Ala-|-Gly bond in repressor LexA.. Functionally, represses a number of genes involved in the response to DNA damage (SOS response), including recA and lexA. In the presence of single-stranded DNA, RecA interacts with LexA causing an autocatalytic cleavage which disrupts the DNA-binding part of LexA, leading to derepression of the SOS regulon and eventually DNA repair. The sequence is that of LexA repressor from Halorhodospira halophila (strain DSM 244 / SL1) (Ectothiorhodospira halophila (strain DSM 244 / SL1)).